The sequence spans 358 residues: Alanine racemase (358 aa).

Residue Lys35 is the Proton acceptor; specific for D-alanine of the active site. Lys35 bears the N6-(pyridoxal phosphate)lysine mark. Substrate is bound at residue Arg130. Tyr255 serves as the catalytic Proton acceptor; specific for L-alanine. Met303 contributes to the substrate binding site.

This sequence belongs to the alanine racemase family. It depends on pyridoxal 5'-phosphate as a cofactor.

The enzyme catalyses L-alanine = D-alanine. It functions in the pathway amino-acid biosynthesis; D-alanine biosynthesis; D-alanine from L-alanine: step 1/1. Its function is as follows. Catalyzes the interconversion of L-alanine and D-alanine. May also act on other amino acids. The chain is Alanine racemase (alr) from Shewanella baltica (strain OS155 / ATCC BAA-1091).